A 1923-amino-acid polypeptide reads, in one-letter code: Callose synthase 5 (1923 aa).

Over residues 1-10 (MAQSSTSHDS) the composition is skewed to polar residues. The disordered stretch occupies residues 1–22 (MAQSSTSHDSGPQGLMRRPSRS). Topologically, residues 1–481 (MAQSSTSHDS…ETRTFWHIYH (481 aa)) are cytoplasmic. The helical transmembrane segment at 482–502 (SFDRLWTFYLLALQAMIILAF) threads the bilayer. At 503 to 521 (ERVELREILRKDVLYALSS) the chain is on the extracellular side. The helical transmembrane segment at 522–542 (IFITAAFLRFLQSVLDVILNF) threads the bilayer. Over 543-559 (PGFHRWKFTDVLRNILK) the chain is Cytoplasmic. A helical membrane pass occupies residues 560–580 (IVVSLAWCVVLPLCYAQSVSF). At 581–601 (APGKLKQWLSFLPQVKGVPPL) the chain is on the extracellular side. The chain crosses the membrane as a helical span at residues 602–622 (YIMAVALYLLPNVLAAIMFIF). Topologically, residues 623–658 (PMLRRWIENSDWHIFRLLLWWSQPRIYVGRGMHESQ) are cytoplasmic. Residues 659-679 (IALIKYTIFWLLLFCCKFAFS) form a helical membrane-spanning segment. Residues 680–719 (YFLQVKLLVKPTNAIMSIRHVKYKWHEFFPNAEHNYGAVV) are Extracellular-facing. The helical transmembrane segment at 720 to 740 (SLWLPVILVYFMDTQIWYAIF) threads the bilayer. Residues 741-1486 (STICGGVIGA…FDFFRMMSCY (746 aa)) are Cytoplasmic-facing. A helical membrane pass occupies residues 1487 to 1507 (FTTVGFYISSMIVVLTVYAFL). Topologically, residues 1508–1535 (YGRLYLSLSGVEEAIVKFAAAKGDSSLK) are extracellular. The chain crosses the membrane as a helical span at residues 1536–1556 (AAMASQSVVQLGLLMTLPMVM). Residues 1557-1566 (EIGLERGFRT) are Cytoplasmic-facing. The helical transmembrane segment at 1567 to 1587 (ALSDLIIMQLQLAPVFFTFSL) threads the bilayer. At 1588–1630 (GTKVHYYGRTILHGGSKYRATGRGFVVKHEKFAENYRMYSRSH) the chain is on the extracellular side. The chain crosses the membrane as a helical span at residues 1631–1651 (FVKGMELMVLLICYRIYGKAA). At 1652–1657 (EDSVGY) the chain is on the cytoplasmic side. The chain crosses the membrane as a helical span at residues 1658–1678 (ALVMGSTWFLVGSWLFAPFFF). Over 1679 to 1732 (NPSGFEWQKIVDDWDDWNKWISSRGGIGVPANKSWESWWEEEQEHLLHSGFFGK) the chain is Extracellular. Asparagine 1710 carries N-linked (GlcNAc...) asparagine glycosylation. A helical membrane pass occupies residues 1733 to 1755 (FWEIFLSLRYFIYQYGIVYQLNL). The Cytoplasmic portion of the chain corresponds to 1756–1766 (TKESRMGKQHS). Residues 1767–1787 (IIVYGLSWLVIVAVMIVLKIV) traverse the membrane as a helical segment. The Extracellular portion of the chain corresponds to 1788 to 1803 (SMGRKKFSADFQLMFR). A helical transmembrane segment spans residues 1804 to 1824 (LLKLFLFIGSVVIVGMLFHFL). A topological domain (cytoplasmic) is located at residue lysine 1825. The helical transmembrane segment at 1826-1846 (LTVGDIMQSLLAFLPTGWALL) threads the bilayer. Residues 1847-1873 (QISQVARPLMKTVGMWGSVKALARGYE) are Extracellular-facing. A helical membrane pass occupies residues 1874–1894 (YIMGVVIFMPVTVLAWFPFVS). The Cytoplasmic portion of the chain corresponds to 1895–1923 (EFQTRLLFNQAFSRGLQIQRILAGGKKQK).

This sequence belongs to the glycosyltransferase 48 family.

It is found in the cell membrane. It carries out the reaction [(1-&gt;3)-beta-D-glucosyl](n) + UDP-alpha-D-glucose = [(1-&gt;3)-beta-D-glucosyl](n+1) + UDP + H(+). Its function is as follows. Required for the formation of the callose wall separating the tetraspores (interstitial wall) and surrounding the pollen mother cells (peripheral wall). Required for exine formation on pollen wall. May be involved in callose synthesis during pollen tube growth. During plant growth and development, callose is found as a transitory component of the cell plate in dividing cells, is a major component of pollen mother cell walls and pollen tubes, and is found as a structural component of plasmodesmatal canals. The polypeptide is Callose synthase 5 (CALS5) (Arabidopsis thaliana (Mouse-ear cress)).